We begin with the raw amino-acid sequence, 306 residues long: MQSARVKYGWLNVDKPLHMSSGSVVGRVKKIFNCKVGHAGTLDPLATGVLPVAVGEATKTIPYAVDGLKSYAVTVQWGSQRSTDDAEGEIIKTSSLRPSADSIREALGQFVGNIRQVPPAFSAVRVRGVRAYRLARRGEAVSLPPKEVCIVSIDLLSADEESNTADFLIVCKKGVYIRSFARDLGASLGCFGYVSFLRRKSVGPFSEENSVTLDRLEALADADVLNEALLPISYVMGDALLRLHVDAEVAEIVKKGQSVSLQRTSLNGLYAAENYDMCYLSRVGGVPVAVCKVVNGTARPVRVFDV.

Asp-43 (nucleophile) is an active-site residue.

The protein belongs to the pseudouridine synthase TruB family. Type 1 subfamily.

The enzyme catalyses uridine(55) in tRNA = pseudouridine(55) in tRNA. Responsible for synthesis of pseudouridine from uracil-55 in the psi GC loop of transfer RNAs. This Anaplasma marginale (strain St. Maries) protein is tRNA pseudouridine synthase B.